The primary structure comprises 269 residues: Chymotrypsin-like elastase family member 3B (269 aa).

The N-terminal stretch at Met1 to Gly16 is a signal peptide. The propeptide at Cys17–Arg27 is activation peptide. The 240-residue stretch at Val28–Ala267 folds into the Peptidase S1 domain. A disulfide bond links Cys57 and Cys73. Active-site charge relay system residues include His72 and Asp122. Disulfide bonds link Cys156/Cys222, Cys187/Cys203, and Cys212/Cys243. Ser216 serves as the catalytic Charge relay system.

Belongs to the peptidase S1 family. Elastase subfamily.

The enzyme catalyses Preferential cleavage: Ala-|-Xaa. Does not hydrolyze elastin.. Efficient protease with alanine specificity but only little elastolytic activity. The polypeptide is Chymotrypsin-like elastase family member 3B (Cela3b) (Mus musculus (Mouse)).